A 399-amino-acid polypeptide reads, in one-letter code: Enolase (399 aa).

Position 149 (glutamine 149) interacts with (2R)-2-phosphoglycerate. Glutamate 191 serves as the catalytic Proton donor. Aspartate 227, glutamate 268, and aspartate 293 together coordinate Mg(2+). The (2R)-2-phosphoglycerate site is built by lysine 318, arginine 347, serine 348, and lysine 369. Lysine 318 acts as the Proton acceptor in catalysis.

Belongs to the enolase family. Mg(2+) serves as cofactor.

The protein localises to the cytoplasm. It localises to the secreted. Its subcellular location is the cell surface. It carries out the reaction (2R)-2-phosphoglycerate = phosphoenolpyruvate + H2O. Its pathway is carbohydrate degradation; glycolysis; pyruvate from D-glyceraldehyde 3-phosphate: step 4/5. Functionally, catalyzes the reversible conversion of 2-phosphoglycerate (2-PG) into phosphoenolpyruvate (PEP). It is essential for the degradation of carbohydrates via glycolysis. In Archaeoglobus fulgidus (strain ATCC 49558 / DSM 4304 / JCM 9628 / NBRC 100126 / VC-16), this protein is Enolase.